The primary structure comprises 339 residues: Nitrilase 2 (339 aa).

Residue serine 2 is modified to N-acetylserine. Residues 18–290 form the CN hydrolase domain; it reads VRATIVQAST…EGLITADLDL (273 aa). Catalysis depends on glutamate 58, which acts as the Proton acceptor. Lysine 145 serves as the catalytic Proton donor. The Nucleophile role is filled by cysteine 179.

The protein belongs to the carbon-nitrogen hydrolase superfamily. Nitrilase family.

Its subcellular location is the cell membrane. It catalyses the reaction a nitrile + 2 H2O = a carboxylate + NH4(+). Its function is as follows. Can convert indole-3-acetonitrile to the plant hormone indole-3-acetic acid. This chain is Nitrilase 2 (NIT2), found in Arabidopsis thaliana (Mouse-ear cress).